We begin with the raw amino-acid sequence, 687 residues long: Glycine--tRNA ligase beta subunit (687 aa).

This sequence belongs to the class-II aminoacyl-tRNA synthetase family. Tetramer of two alpha and two beta subunits.

Its subcellular location is the cytoplasm. The catalysed reaction is tRNA(Gly) + glycine + ATP = glycyl-tRNA(Gly) + AMP + diphosphate. The polypeptide is Glycine--tRNA ligase beta subunit (Neisseria meningitidis serogroup C / serotype 2a (strain ATCC 700532 / DSM 15464 / FAM18)).